Here is a 189-residue protein sequence, read N- to C-terminus: dCTP deaminase (189 aa).

DCTP is bound by residues 112-117 (KSTYAR), 136-138 (TLE), Gln-157, Tyr-171, and Gln-181. The Proton donor/acceptor role is filled by Glu-138.

This sequence belongs to the dCTP deaminase family. Homotrimer.

It catalyses the reaction dCTP + H2O + H(+) = dUTP + NH4(+). It participates in pyrimidine metabolism; dUMP biosynthesis; dUMP from dCTP (dUTP route): step 1/2. In terms of biological role, catalyzes the deamination of dCTP to dUTP. The sequence is that of dCTP deaminase from Xanthomonas campestris pv. campestris (strain 8004).